The sequence spans 234 residues: Sugar fermentation stimulation protein homolog (234 aa).

This sequence belongs to the SfsA family.

The protein is Sugar fermentation stimulation protein homolog of Shewanella baltica (strain OS155 / ATCC BAA-1091).